The sequence spans 205 residues: Histone H1, early embryonic (205 aa).

Disordered stretches follow at residues 1-21 (MAEKNSSKKVTTKKPAAHPPA) and 94-205 (AKAQ…AKSK). The 75-residue stretch at 17–91 (AHPPAAEMVA…GASGSFKVNV (75 aa)) folds into the H15 domain. The span at 98–124 (ASEKAKKEKEKAKLLAQREKAKEKGCS) shows a compositional bias: basic and acidic residues. 2 stretches are compositionally biased toward basic residues: residues 135–150 (PKKVKAAPKKAKKPVK) and 157–205 (EKKK…AKSK).

It belongs to the histone H1/H5 family.

It is found in the nucleus. The protein resides in the chromosome. In terms of biological role, histones H1 are necessary for the condensation of nucleosome chains into higher-order structures. The chain is Histone H1, early embryonic from Strongylocentrotus purpuratus (Purple sea urchin).